The chain runs to 435 residues: Trigger factor (435 aa).

Residues 125–147 (MEVPEQDTSVSDADVDSELENKR) are disordered. In terms of domain architecture, PPIase FKBP-type spans 164–249 (GDTVVIDYEG…IHEVKEKQLP (86 aa)).

It belongs to the FKBP-type PPIase family. Tig subfamily.

It localises to the cytoplasm. It carries out the reaction [protein]-peptidylproline (omega=180) = [protein]-peptidylproline (omega=0). In terms of biological role, involved in protein export. Acts as a chaperone by maintaining the newly synthesized protein in an open conformation. Functions as a peptidyl-prolyl cis-trans isomerase. The protein is Trigger factor of Limosilactobacillus fermentum (strain NBRC 3956 / LMG 18251) (Lactobacillus fermentum).